The following is a 341-amino-acid chain: Ferrochelatase (341 aa).

His210 and Glu291 together coordinate Fe cation.

It belongs to the ferrochelatase family.

The protein resides in the cytoplasm. The catalysed reaction is heme b + 2 H(+) = protoporphyrin IX + Fe(2+). The protein operates within porphyrin-containing compound metabolism; protoheme biosynthesis; protoheme from protoporphyrin-IX: step 1/1. Functionally, catalyzes the ferrous insertion into protoporphyrin IX. This Alcanivorax borkumensis (strain ATCC 700651 / DSM 11573 / NCIMB 13689 / SK2) protein is Ferrochelatase.